A 326-amino-acid polypeptide reads, in one-letter code: Pyruvate dehydrogenase E1 component subunit alpha (326 aa).

In terms of assembly, heterodimer of an alpha and a beta chain. Thiamine diphosphate is required as a cofactor.

The catalysed reaction is N(6)-[(R)-lipoyl]-L-lysyl-[protein] + pyruvate + H(+) = N(6)-[(R)-S(8)-acetyldihydrolipoyl]-L-lysyl-[protein] + CO2. The pyruvate dehydrogenase complex catalyzes the overall conversion of pyruvate to acetyl-CoA and CO(2). It contains multiple copies of three enzymatic components: pyruvate dehydrogenase (E1), dihydrolipoamide acetyltransferase (E2) and lipoamide dehydrogenase (E3). In Rickettsia typhi (strain ATCC VR-144 / Wilmington), this protein is Pyruvate dehydrogenase E1 component subunit alpha (pdhA).